The primary structure comprises 212 residues: MSLGLVGRKVGMTRIFADDGRSIPVTVLDVSDNKVTQIKTPEADGYSAVQVAFGKRRASRVVKPIAGHLAKAGVEPSRVLKEFRVEPEGLASLKAGDQVSVEIFSVGQKVDVTGVSIGKGFSGPIKRHNFSSNRASHGNSVSHNSPGSIGMAQDPGRVFPGKRMAGQYGAVQRTTLGLEVVRVDAERQLLLVKGAVPGAKGGDVVVRPAIKA.

Position 153 is an N5-methylglutamine (Gln-153).

The protein belongs to the universal ribosomal protein uL3 family. In terms of assembly, part of the 50S ribosomal subunit. Forms a cluster with proteins L14 and L19. Methylated by PrmB.

In terms of biological role, one of the primary rRNA binding proteins, it binds directly near the 3'-end of the 23S rRNA, where it nucleates assembly of the 50S subunit. In Azoarcus sp. (strain BH72), this protein is Large ribosomal subunit protein uL3.